An 876-amino-acid polypeptide reads, in one-letter code: DNA mismatch repair protein MutS (876 aa).

628-635 contacts ATP; sequence GPNMAGKS.

This sequence belongs to the DNA mismatch repair MutS family.

Its function is as follows. This protein is involved in the repair of mismatches in DNA. It is possible that it carries out the mismatch recognition step. This protein has a weak ATPase activity. In Chlorobaculum parvum (strain DSM 263 / NCIMB 8327) (Chlorobium vibrioforme subsp. thiosulfatophilum), this protein is DNA mismatch repair protein MutS.